The following is a 284-amino-acid chain: Bifunctional protein FolD (284 aa).

Residues 166-168 (GAS) and Ile-232 contribute to the NADP(+) site.

This sequence belongs to the tetrahydrofolate dehydrogenase/cyclohydrolase family. Homodimer.

It carries out the reaction (6R)-5,10-methylene-5,6,7,8-tetrahydrofolate + NADP(+) = (6R)-5,10-methenyltetrahydrofolate + NADPH. The enzyme catalyses (6R)-5,10-methenyltetrahydrofolate + H2O = (6R)-10-formyltetrahydrofolate + H(+). The protein operates within one-carbon metabolism; tetrahydrofolate interconversion. Its function is as follows. Catalyzes the oxidation of 5,10-methylenetetrahydrofolate to 5,10-methenyltetrahydrofolate and then the hydrolysis of 5,10-methenyltetrahydrofolate to 10-formyltetrahydrofolate. The sequence is that of Bifunctional protein FolD from Shewanella sediminis (strain HAW-EB3).